The sequence spans 240 residues: UDP-2,3-diacylglucosamine hydrolase (240 aa).

Residues D8, H10, D41, N79, and H114 each coordinate Mn(2+). A substrate-binding site is contributed by 79-80 (NR). 5 residues coordinate substrate: D122, S160, N164, K167, and H195. 2 residues coordinate Mn(2+): H195 and H197.

Belongs to the LpxH family. The cofactor is Mn(2+).

Its subcellular location is the cell inner membrane. It carries out the reaction UDP-2-N,3-O-bis[(3R)-3-hydroxytetradecanoyl]-alpha-D-glucosamine + H2O = 2-N,3-O-bis[(3R)-3-hydroxytetradecanoyl]-alpha-D-glucosaminyl 1-phosphate + UMP + 2 H(+). Its pathway is glycolipid biosynthesis; lipid IV(A) biosynthesis; lipid IV(A) from (3R)-3-hydroxytetradecanoyl-[acyl-carrier-protein] and UDP-N-acetyl-alpha-D-glucosamine: step 4/6. Functionally, hydrolyzes the pyrophosphate bond of UDP-2,3-diacylglucosamine to yield 2,3-diacylglucosamine 1-phosphate (lipid X) and UMP by catalyzing the attack of water at the alpha-P atom. Involved in the biosynthesis of lipid A, a phosphorylated glycolipid that anchors the lipopolysaccharide to the outer membrane of the cell. The protein is UDP-2,3-diacylglucosamine hydrolase of Escherichia coli O127:H6 (strain E2348/69 / EPEC).